Consider the following 693-residue polypeptide: Elongation factor G (693 aa).

The tr-type G domain maps to 8–282; that stretch reads EKFRNFGIMA…AVVDYLPSPI (275 aa). GTP contacts are provided by residues 17-24, 81-85, and 135-138; these read AHIDAGKT, DTPGH, and NKMD.

The protein belongs to the TRAFAC class translation factor GTPase superfamily. Classic translation factor GTPase family. EF-G/EF-2 subfamily.

Its subcellular location is the cytoplasm. Its function is as follows. Catalyzes the GTP-dependent ribosomal translocation step during translation elongation. During this step, the ribosome changes from the pre-translocational (PRE) to the post-translocational (POST) state as the newly formed A-site-bound peptidyl-tRNA and P-site-bound deacylated tRNA move to the P and E sites, respectively. Catalyzes the coordinated movement of the two tRNA molecules, the mRNA and conformational changes in the ribosome. This is Elongation factor G from Mycoplasmoides gallisepticum (strain R(low / passage 15 / clone 2)) (Mycoplasma gallisepticum).